The sequence spans 348 residues: 3-methyl-2-oxobutanoate dehydrogenase subunit beta (348 aa).

Thiamine diphosphate contacts are provided by residues Glu51, 80 to 82, Gln104, and 108 to 111; these read LAE and FSYP. Substrate is bound by residues 105–108 and His151; that span reads FDGF. Residue His151 is the Proton acceptor of the active site.

Heteromer of E1 alpha (BkdA) and beta (BkdB) subunits. Part of the BCKADH complex, consisting of multiple copies of BkdA/BkdB (E1), BkdC (E2) and Lpd (E3). Thiamine diphosphate serves as cofactor.

It catalyses the reaction N(6)-[(R)-lipoyl]-L-lysyl-[protein] + 3-methyl-2-oxobutanoate + H(+) = N(6)-[(R)-S(8)-2-methylpropanoyldihydrolipoyl]-L-lysyl-[protein] + CO2. In terms of biological role, component of the branched-chain alpha-ketoacid dehydrogenase (BCKADH) complex, that catalyzes the overall conversion of branched-chain alpha-ketoacids to acyl-CoA and CO(2). This is 3-methyl-2-oxobutanoate dehydrogenase subunit beta (bkdB) from Mycobacterium tuberculosis (strain CDC 1551 / Oshkosh).